The chain runs to 500 residues: Aspartyl/glutamyl-tRNA(Asn/Gln) amidotransferase subunit B (500 aa).

This sequence belongs to the GatB/GatE family. GatB subfamily. Heterotrimer of A, B and C subunits.

The catalysed reaction is L-glutamyl-tRNA(Gln) + L-glutamine + ATP + H2O = L-glutaminyl-tRNA(Gln) + L-glutamate + ADP + phosphate + H(+). It catalyses the reaction L-aspartyl-tRNA(Asn) + L-glutamine + ATP + H2O = L-asparaginyl-tRNA(Asn) + L-glutamate + ADP + phosphate + 2 H(+). Its function is as follows. Allows the formation of correctly charged Asn-tRNA(Asn) or Gln-tRNA(Gln) through the transamidation of misacylated Asp-tRNA(Asn) or Glu-tRNA(Gln) in organisms which lack either or both of asparaginyl-tRNA or glutaminyl-tRNA synthetases. The reaction takes place in the presence of glutamine and ATP through an activated phospho-Asp-tRNA(Asn) or phospho-Glu-tRNA(Gln). This chain is Aspartyl/glutamyl-tRNA(Asn/Gln) amidotransferase subunit B, found in Sinorhizobium medicae (strain WSM419) (Ensifer medicae).